The following is a 476-amino-acid chain: Ribosomal protein uS12 methylthiotransferase RimO (476 aa).

Residues 33 to 143 (NRIGFVSLGC…VLKHVHKYVP (111 aa)) form the MTTase N-terminal domain. Residues C42, C78, C107, C175, C179, and C182 each contribute to the [4Fe-4S] cluster site. The 238-residue stretch at 161–398 (LTPKHYAYLK…MEVQAEISAE (238 aa)) folds into the Radical SAM core domain. In terms of domain architecture, TRAM spans 401–467 (ARFVGRTMDI…EHDLWAELVD (67 aa)).

The protein belongs to the methylthiotransferase family. RimO subfamily. It depends on [4Fe-4S] cluster as a cofactor.

Its subcellular location is the cytoplasm. The enzyme catalyses L-aspartate(89)-[ribosomal protein uS12]-hydrogen + (sulfur carrier)-SH + AH2 + 2 S-adenosyl-L-methionine = 3-methylsulfanyl-L-aspartate(89)-[ribosomal protein uS12]-hydrogen + (sulfur carrier)-H + 5'-deoxyadenosine + L-methionine + A + S-adenosyl-L-homocysteine + 2 H(+). In terms of biological role, catalyzes the methylthiolation of an aspartic acid residue of ribosomal protein uS12. In Shewanella sp. (strain MR-4), this protein is Ribosomal protein uS12 methylthiotransferase RimO.